The sequence spans 1189 residues: Pumilio homolog 1 (1189 aa).

5 disordered regions span residues 24-65 (QHAQ…SSPV), 233-288 (SCLR…QNGI), 491-525 (QQTT…GQQT), 614-652 (AGTT…NNSL), and 743-774 (GPVG…SSLN). The segment covering 45–58 (QAQPQPAANQALAA) has biased composition (low complexity). The segment covering 250–277 (NDKGDKKNKGTFDGDKLGDLKEEGDVMD) has biased composition (basic and acidic residues). A compositionally biased stretch (low complexity) spans 491 to 503 (QQTTQQTQQGQQQ). The segment covering 512 to 525 (RPLTPNQNQQGQQT) has biased composition (polar residues). Composition is skewed to low complexity over residues 627–652 (QQPQ…NNSL) and 764–774 (LSSHGSSSSLN). The PUM-HD domain occupies 829 to 1171 (GRSRLLEDFR…HILAKLEKYY (343 aa)). Pumilio repeat units follow at residues 849 to 884 (EIAG…LVFN), 885 to 920 (EILQ…ALAE), 921 to 958 (RIRG…EMVR), 959 to 994 (ELDG…FIID), 995 to 1030 (AFKG…PILE), 1031 to 1066 (ELHQ…KIVA), 1067 to 1102 (EIRG…MLID), and 1106 to 1145 (TMND…IVMH). Residues 864–868 (SRFIQ) form an adenine-nucleotide binding in RNA target region. Residues 900-904 (NYVIQ) form a uracil-nucleotide binding in RNA target region. Residues 936 to 940 (CRVIQ) are adenine-nucleotide binding in RNA target. Positions 974–978 (NHVVQ) are non-specific-nucleotide binding in RNA target. Residues 1010 to 1014 (CRVIQ) are adenine-nucleotide binding in RNA target. The uracil-nucleotide binding in RNA target stretch occupies residues 1046–1050 (NYVIQ). Guanine-nucleotide binding in RNA target stretches follow at residues 1082–1086 (SNVVE) and 1083–1086 (NVVE). The interval 1125–1129 (NYVVQ) is uracil-nucleotide binding in RNA target.

As to expression, detected in embryonic male and female gonads, heart, liver and muscle. Detected in adult brain, testis, ovary, heart, lung, spleen, kidney and muscle.

It is found in the cytoplasm. It localises to the P-body. The protein localises to the cytoplasmic granule. Its function is as follows. Sequence-specific RNA-binding protein that acts as a post-transcriptional repressor by binding the 3'-UTR of mRNA targets. Binds to an RNA consensus sequence, the Pumilio Response Element (PRE), 5'-UGUANAUA-3', that is related to the Nanos Response Element (NRE). Mediates post-transcriptional repression of transcripts via different mechanisms: acts via direct recruitment of the CCR4-POP2-NOT deadenylase leading to translational inhibition and mRNA degradation. Also mediates deadenylation-independent repression by promoting accessibility of miRNAs. In Gallus gallus (Chicken), this protein is Pumilio homolog 1 (PUM1).